Reading from the N-terminus, the 445-residue chain is 23S rRNA (uracil(1939)-C(5))-methyltransferase RlmD (445 aa).

A TRAM domain is found at 12 to 70 (SKQLSSKLSLKVTQLDHLGAGIAHHDGKIVFINGALPGETVSVQLTEQKKKFARAKLLK). Cys-83, Cys-89, Cys-92, and Cys-171 together coordinate [4Fe-4S] cluster. 6 residues coordinate S-adenosyl-L-methionine: Gln-278, Phe-307, Asn-312, Glu-328, Asp-355, and Asp-375. Cys-401 serves as the catalytic Nucleophile.

Belongs to the class I-like SAM-binding methyltransferase superfamily. RNA M5U methyltransferase family. RlmD subfamily.

The enzyme catalyses uridine(1939) in 23S rRNA + S-adenosyl-L-methionine = 5-methyluridine(1939) in 23S rRNA + S-adenosyl-L-homocysteine + H(+). Catalyzes the formation of 5-methyl-uridine at position 1939 (m5U1939) in 23S rRNA. This chain is 23S rRNA (uracil(1939)-C(5))-methyltransferase RlmD, found in Shewanella halifaxensis (strain HAW-EB4).